Consider the following 186-residue polypeptide: Threonylcarbamoyl-AMP synthase (186 aa).

The region spanning T5–L186 is the YrdC-like domain.

The protein belongs to the SUA5 family. TsaC subfamily.

Its subcellular location is the cytoplasm. The catalysed reaction is L-threonine + hydrogencarbonate + ATP = L-threonylcarbamoyladenylate + diphosphate + H2O. Its function is as follows. Required for the formation of a threonylcarbamoyl group on adenosine at position 37 (t(6)A37) in tRNAs that read codons beginning with adenine. Catalyzes the conversion of L-threonine, HCO(3)(-)/CO(2) and ATP to give threonylcarbamoyl-AMP (TC-AMP) as the acyladenylate intermediate, with the release of diphosphate. The sequence is that of Threonylcarbamoyl-AMP synthase from Coxiella burnetii (strain RSA 493 / Nine Mile phase I).